The following is a 246-amino-acid chain: tRNA (guanine-N(7)-)-methyltransferase (246 aa).

Residues 1–26 (MSDSSSSSENAPATPESPGRPPRGIK) form a disordered region. Positions 74, 99, 126, and 149 each coordinate S-adenosyl-L-methionine. Asp149 is a catalytic residue. Substrate contacts are provided by residues Lys153, Asp185, and 224–227 (TKFE).

This sequence belongs to the class I-like SAM-binding methyltransferase superfamily. TrmB family.

The enzyme catalyses guanosine(46) in tRNA + S-adenosyl-L-methionine = N(7)-methylguanosine(46) in tRNA + S-adenosyl-L-homocysteine. Its pathway is tRNA modification; N(7)-methylguanine-tRNA biosynthesis. In terms of biological role, catalyzes the formation of N(7)-methylguanine at position 46 (m7G46) in tRNA. This is tRNA (guanine-N(7)-)-methyltransferase from Chromohalobacter salexigens (strain ATCC BAA-138 / DSM 3043 / CIP 106854 / NCIMB 13768 / 1H11).